The chain runs to 610 residues: Aspartate--tRNA(Asp/Asn) ligase (610 aa).

Glutamate 196 contributes to the L-aspartate binding site. An aspartate region spans residues glutamine 220 to lysine 223. Arginine 242 provides a ligand contact to L-aspartate. ATP contacts are provided by residues arginine 242–glutamate 244 and glutamine 251. Position 465 (histidine 465) interacts with L-aspartate. Glutamate 499 is an ATP binding site. L-aspartate is bound at residue arginine 506. Glycine 551–arginine 554 is an ATP binding site.

This sequence belongs to the class-II aminoacyl-tRNA synthetase family. Type 1 subfamily. As to quaternary structure, homodimer.

The protein resides in the cytoplasm. It carries out the reaction tRNA(Asx) + L-aspartate + ATP = L-aspartyl-tRNA(Asx) + AMP + diphosphate. In terms of biological role, aspartyl-tRNA synthetase with relaxed tRNA specificity since it is able to aspartylate not only its cognate tRNA(Asp) but also tRNA(Asn). Reaction proceeds in two steps: L-aspartate is first activated by ATP to form Asp-AMP and then transferred to the acceptor end of tRNA(Asp/Asn). This is Aspartate--tRNA(Asp/Asn) ligase from Nitratidesulfovibrio vulgaris (strain ATCC 29579 / DSM 644 / CCUG 34227 / NCIMB 8303 / VKM B-1760 / Hildenborough) (Desulfovibrio vulgaris).